The primary structure comprises 293 residues: ATP synthase gamma chain (293 aa).

It belongs to the ATPase gamma chain family. F-type ATPases have 2 components, CF(1) - the catalytic core - and CF(0) - the membrane proton channel. CF(1) has five subunits: alpha(3), beta(3), gamma(1), delta(1), epsilon(1). CF(0) has three main subunits: a, b and c.

It is found in the cell inner membrane. Functionally, produces ATP from ADP in the presence of a proton gradient across the membrane. The gamma chain is believed to be important in regulating ATPase activity and the flow of protons through the CF(0) complex. The polypeptide is ATP synthase gamma chain (Nitratidesulfovibrio vulgaris (strain DSM 19637 / Miyazaki F) (Desulfovibrio vulgaris)).